Reading from the N-terminus, the 255-residue chain is MPPASDAHAAPDAAASTSASPQSCAAPPDTLPVTVRWLGETPYDACFDAMRAFTDARTPDTGDEIWVVEHPPVYTLGQAGNPAHLLVADSGVPLVKVDRGGQITYHGPGQIVAYLLIDLRRRKLMVRTLVTRIEQAVIETLAAYNLASVRKAGAPGIYVESGPHHGAKIAALGLKIRNGCSYHGLSVNVKMDLRPFLAINPCGYAGLETVDMASLGATADWHEVARTLVRRLIANLDGATAAAALPQQALEQSND.

The interval 1–27 (MPPASDAHAAPDAAASTSASPQSCAAP) is disordered. Positions 59–240 (PDTGDEIWVV…RLIANLDGAT (182 aa)) constitute a BPL/LPL catalytic domain. Residues 99–106 (RGGQITYH), 171–173 (ALG), and 184–186 (GLS) each bind substrate. Cysteine 202 serves as the catalytic Acyl-thioester intermediate.

Belongs to the LipB family.

The protein localises to the cytoplasm. It carries out the reaction octanoyl-[ACP] + L-lysyl-[protein] = N(6)-octanoyl-L-lysyl-[protein] + holo-[ACP] + H(+). Its pathway is protein modification; protein lipoylation via endogenous pathway; protein N(6)-(lipoyl)lysine from octanoyl-[acyl-carrier-protein]: step 1/2. Catalyzes the transfer of endogenously produced octanoic acid from octanoyl-acyl-carrier-protein onto the lipoyl domains of lipoate-dependent enzymes. Lipoyl-ACP can also act as a substrate although octanoyl-ACP is likely to be the physiological substrate. The sequence is that of Octanoyltransferase from Burkholderia thailandensis (strain ATCC 700388 / DSM 13276 / CCUG 48851 / CIP 106301 / E264).